The following is a 734-amino-acid chain: Transcriptional regulator AacuB (734 aa).

The segment at residues 26–52 (CVLCQQRKIKCDRTFPCTNCVRAHVQC) is a DNA-binding region (zn(2)-C6 fungal-type). Residues 86-107 (FDPLHTPTADHRSASDDGRDDL) are compositionally biased toward basic and acidic residues. A disordered region spans residues 86-122 (FDPLHTPTADHRSASDDGRDDLPEGAESEGTFGEREK).

The protein resides in the nucleus. Functionally, transcriptional regulator; part of the gene cluster that mediates the biosynthesis of the tetrahydroxanthone dimer secalonic acid D. The sequence is that of Transcriptional regulator AacuB from Aspergillus aculeatus (strain ATCC 16872 / CBS 172.66 / WB 5094).